The chain runs to 63 residues: Putative conjugal transfer lipoprotein XF_a0011.1 (63 aa).

Residues 1–15 (MRYTFGIVTVYLLAG) form the signal peptide. A lipid anchor (N-palmitoyl cysteine) is attached at C16. C16 carries S-diacylglycerol cysteine lipidation.

It to B.suis ORF12 in VirB region.

It is found in the cell inner membrane. This Xylella fastidiosa (strain 9a5c) protein is Putative conjugal transfer lipoprotein XF_a0011.1.